The chain runs to 122 residues: Large ribosomal subunit protein uL14 (122 aa).

The protein belongs to the universal ribosomal protein uL14 family. In terms of assembly, part of the 50S ribosomal subunit. Forms a cluster with proteins L3 and L19. In the 70S ribosome, L14 and L19 interact and together make contacts with the 16S rRNA in bridges B5 and B8.

Functionally, binds to 23S rRNA. Forms part of two intersubunit bridges in the 70S ribosome. In Streptococcus agalactiae serotype Ia (strain ATCC 27591 / A909 / CDC SS700), this protein is Large ribosomal subunit protein uL14.